The chain runs to 69 residues: uncharacterized protein (69 aa).

2 helical membrane passes run 7–29 (LLSG…LGSI) and 44–66 (ALQV…LGLL).

It localises to the cell membrane. This is an uncharacterized protein from Archaeoglobus fulgidus (strain ATCC 49558 / DSM 4304 / JCM 9628 / NBRC 100126 / VC-16).